The following is a 244-amino-acid chain: MILLGVNIDHVATLRNARGTRYPSPVEAALVAETAGADLITLHLREDRRHIKDDDLAVMRAAIKTRMNLEMALTDEMLDNALRVLPQDVCIVPEKREELTTEGGLDVIRYFDRIADFTRQLQAKGIRVSLFIDPDDEQIKASHETGATVVELHTGRYADAESHDIRQRELTRIRHAAIVGVDLGLVVNAGHGLSYHNVQPVAAIREIRELNIGHAIVAHALMVGFAPAVREMKALMVEARHNAA.

Asn7 lines the 3-amino-2-oxopropyl phosphate pocket. 9 to 10 (DH) provides a ligand contact to 1-deoxy-D-xylulose 5-phosphate. A 3-amino-2-oxopropyl phosphate-binding site is contributed by Arg18. His43 (proton acceptor) is an active-site residue. Positions 45 and 50 each coordinate 1-deoxy-D-xylulose 5-phosphate. The Proton acceptor role is filled by Glu70. Thr100 serves as a coordination point for 1-deoxy-D-xylulose 5-phosphate. His191 acts as the Proton donor in catalysis. 3-amino-2-oxopropyl phosphate is bound by residues Gly192 and 213–214 (GH).

Belongs to the PNP synthase family. Homooctamer; tetramer of dimers.

Its subcellular location is the cytoplasm. The catalysed reaction is 3-amino-2-oxopropyl phosphate + 1-deoxy-D-xylulose 5-phosphate = pyridoxine 5'-phosphate + phosphate + 2 H2O + H(+). It functions in the pathway cofactor biosynthesis; pyridoxine 5'-phosphate biosynthesis; pyridoxine 5'-phosphate from D-erythrose 4-phosphate: step 5/5. Its function is as follows. Catalyzes the complicated ring closure reaction between the two acyclic compounds 1-deoxy-D-xylulose-5-phosphate (DXP) and 3-amino-2-oxopropyl phosphate (1-amino-acetone-3-phosphate or AAP) to form pyridoxine 5'-phosphate (PNP) and inorganic phosphate. This is Pyridoxine 5'-phosphate synthase from Laribacter hongkongensis (strain HLHK9).